A 236-amino-acid polypeptide reads, in one-letter code: Transcriptional activator protein SolR (236 aa).

The 66-residue stretch at 169-234 (VPESSAALTA…QAVVKAIAIG (66 aa)) folds into the HTH luxR-type domain. Residues 193–212 (AYEIGQILRISERTVNFHVN) constitute a DNA-binding region (H-T-H motif).

Belongs to the autoinducer-regulated transcriptional regulatory protein family.

This is Transcriptional activator protein SolR (solR) from Ralstonia nicotianae (strain ATCC BAA-1114 / GMI1000) (Ralstonia solanacearum).